A 207-amino-acid polypeptide reads, in one-letter code: Ribosomal RNA large subunit methyltransferase E (207 aa).

Residues glycine 60, tryptophan 62, aspartate 80, aspartate 96, and aspartate 121 each contribute to the S-adenosyl-L-methionine site. Lysine 161 (proton acceptor) is an active-site residue.

The protein belongs to the class I-like SAM-binding methyltransferase superfamily. RNA methyltransferase RlmE family.

Its subcellular location is the cytoplasm. The catalysed reaction is uridine(2552) in 23S rRNA + S-adenosyl-L-methionine = 2'-O-methyluridine(2552) in 23S rRNA + S-adenosyl-L-homocysteine + H(+). In terms of biological role, specifically methylates the uridine in position 2552 of 23S rRNA at the 2'-O position of the ribose in the fully assembled 50S ribosomal subunit. This Ectopseudomonas mendocina (strain ymp) (Pseudomonas mendocina) protein is Ribosomal RNA large subunit methyltransferase E.